The chain runs to 273 residues: Undecaprenyl-diphosphatase (273 aa).

Transmembrane regions (helical) follow at residues G13–N35, V45–Y62, F82–K102, L108–V128, T186–L206, L219–L239, and F250–I270.

Belongs to the UppP family.

The protein resides in the cell inner membrane. It carries out the reaction di-trans,octa-cis-undecaprenyl diphosphate + H2O = di-trans,octa-cis-undecaprenyl phosphate + phosphate + H(+). Catalyzes the dephosphorylation of undecaprenyl diphosphate (UPP). Confers resistance to bacitracin. This is Undecaprenyl-diphosphatase from Neisseria meningitidis serogroup A / serotype 4A (strain DSM 15465 / Z2491).